Reading from the N-terminus, the 373-residue chain is Chaperone protein DnaJ (373 aa).

The J domain occupies 5 to 70 (DYYELLEVDR…EKRALYDQYG (66 aa)). Residues 134–211 (GTQKEVHYSF…CSGKGYRIEK (78 aa)) form a CR-type zinc finger. Residues Cys-147, Cys-150, Cys-163, Cys-166, Cys-185, Cys-188, Cys-199, and Cys-202 each contribute to the Zn(2+) site. 4 CXXCXGXG motif repeats span residues 147–154 (CSACKGTG), 163–170 (CPECHGRG), 185–192 (CPRCHGQG), and 199–206 (CEECSGKG).

It belongs to the DnaJ family. As to quaternary structure, homodimer. It depends on Zn(2+) as a cofactor.

Its subcellular location is the cytoplasm. Functionally, participates actively in the response to hyperosmotic and heat shock by preventing the aggregation of stress-denatured proteins and by disaggregating proteins, also in an autonomous, DnaK-independent fashion. Unfolded proteins bind initially to DnaJ; upon interaction with the DnaJ-bound protein, DnaK hydrolyzes its bound ATP, resulting in the formation of a stable complex. GrpE releases ADP from DnaK; ATP binding to DnaK triggers the release of the substrate protein, thus completing the reaction cycle. Several rounds of ATP-dependent interactions between DnaJ, DnaK and GrpE are required for fully efficient folding. Also involved, together with DnaK and GrpE, in the DNA replication of plasmids through activation of initiation proteins. This is Chaperone protein DnaJ from Nitratiruptor sp. (strain SB155-2).